The chain runs to 554 residues: GPI transamidase component PIG-S homolog (554 aa).

At 1–73 (MSPCKWLTMF…LNKPEKSLKR (73 aa)) the chain is on the cytoplasmic side. Residues 74-94 (YALLSFYVIILLAIPVWWKTT) traverse the membrane as a helical segment. At 95 to 511 (HYERSSLPFE…VTTIYFPDES (417 aa)) the chain is on the lumenal side. Residues Asn-132 and Asn-375 are each glycosylated (N-linked (GlcNAc...) asparagine). A helical transmembrane segment spans residues 512–532 (KYGIYAPLFAPILIPLLISFI). At 533 to 554 (KEVKDMLRERKLHRVANVPKPN) the chain is on the cytoplasmic side.

The protein belongs to the PIGS family. In terms of assembly, forms a complex with PIG-T homolog, PIG-U homolog and GPI8.

It is found in the endoplasmic reticulum membrane. It participates in glycolipid biosynthesis; glycosylphosphatidylinositol-anchor biosynthesis. Its function is as follows. Component of the GPI transamidase complex. Involved in transfer of GPI to proteins. In Schizosaccharomyces pombe (strain 972 / ATCC 24843) (Fission yeast), this protein is GPI transamidase component PIG-S homolog (gpi17).